Here is a 168-residue protein sequence, read N- to C-terminus: Probable chemoreceptor glutamine deamidase CheD 2 (168 aa).

It belongs to the CheD family.

It catalyses the reaction L-glutaminyl-[protein] + H2O = L-glutamyl-[protein] + NH4(+). In terms of biological role, probably deamidates glutamine residues to glutamate on methyl-accepting chemotaxis receptors (MCPs), playing an important role in chemotaxis. In Leptospira interrogans serogroup Icterohaemorrhagiae serovar copenhageni (strain Fiocruz L1-130), this protein is Probable chemoreceptor glutamine deamidase CheD 2.